Consider the following 179-residue polypeptide: Nuclear transcription factor Y subunit B (179 aa).

The segment at 1–32 (MAEAPASPGGGGGSHESGSPRGGGGGGSVREQ) is disordered. Gly residues predominate over residues 8 to 28 (PGGGGGSHESGSPRGGGGGGS). Residues 36 to 42 (LPIANIS) mediate DNA binding. The interval 63 to 74 (VQECVSEFISFI) is subunit association domain (SAD). The segment at 147-179 (SSSAAEGMGQQGAYNQGMGYMQPQYHNGDISNV) is disordered.

It belongs to the NFYB/HAP3 subunit family. In terms of assembly, heterotrimeric transcription factor composed of three components, NF-YA, NF-YB and NF-YC. NF-YB and NF-YC must interact and dimerize for NF-YA association and DNA binding.

The protein resides in the nucleus. Functionally, component of the NF-Y/HAP transcription factor complex. The NF-Y complex stimulates the transcription of various genes by recognizing and binding to a CCAAT motif in promoters. The polypeptide is Nuclear transcription factor Y subunit B (NFY2) (Zea mays (Maize)).